An 852-amino-acid chain; its full sequence is MATGVSSRDGSRERIRRRAVARDHPGCGPHRLDRPIGHIRYPHRHSISFSPFASLTLSHDPAPSQSVGKRPQKSTKTASRRKVETAAADAPRFINRELAWLEFNARVLDQADDPSVRLLERAKFLAITSSNLDEFMMVRVGSLKLQAVSGGGRRDPSGRTATEQLQAISKRCQGHVDRQYELLRNELLPLLGEHKINQVDPAECSDRLLAAAERHFRGDVLAVLSPQALHDRRFPMLPGLGIHLCVQLRPGDEIGPQRTPPPSDSLDNRVPSNLKRNSDTANQQPTPAENISAPEDGAEQTEPETQFAVIPLGRTLGRVIPLPIEKPPIEKGVAPKESDDTSPIESGYSYALLEDLVSHFVDEFFPGREVIQCKPFRITRNADIELREDGAGDLLGGMEEVLESRRLSDVVRLEIDANANSEIRDYLIKSFNVDPQFVFDIDGPLDLTYLFALHGLKGMNTLRDDEWPPQRSPRIDPAESMFTSISDGDIMLMHPYESFDPVVRLLEEASVDPDVLAVKQILYRTSRNSPIVAALMRAAERGKYVTAIVELKARFDEARNIEWAREMEQAGVQVIYGIRGLKTHAKVCIIVRREPQGLVRYVHFGTGNYNEVTANLYGDISVLTCDEILGTDATMFFNAVTGASQPQPLQQLGMAPLTLRRQILDLIQGETERSRQGQKGEIIAKMNALVDTEVIDSLYMASQAGVKIRLNVRGVCCLRPGVPGMSETIEVVSIVDRFLEHARTFYFRHGGDHEMFISSADWMPRNLDRRVELLVPVIDPAARKRLRETLQLYFRDNQNAWRMQPDGSYQRLKPRKNEAPMRVQETLYHQVVENRKAGKHAPQSTFETHRPD.

Disordered regions lie at residues 1-36 (MATG…DRPI) and 58-82 (SHDP…SRRK). A compositionally biased stretch (basic and acidic residues) spans 20–36 (VARDHPGCGPHRLDRPI). Residues 58-67 (SHDPAPSQSV) show a composition bias toward polar residues. Asparagine 131 is a binding site for ATP. The interval 251 to 303 (GDEIGPQRTPPPSDSLDNRVPSNLKRNSDTANQQPTPAENISAPEDGAEQTEP) is disordered. The insert stretch occupies residues 258–303 (RTPPPSDSLDNRVPSNLKRNSDTANQQPTPAENISAPEDGAEQTEP). The span at 270 to 289 (VPSNLKRNSDTANQQPTPAE) shows a compositional bias: polar residues. Residues arginine 524 and arginine 554 each coordinate Mg(2+). The Phosphohistidine intermediate role is filled by histidine 584. Tyrosine 617, arginine 713, and histidine 741 together coordinate ATP.

This sequence belongs to the polyphosphate kinase 1 (PPK1) family. The cofactor is Mg(2+). An intermediate of this reaction is the autophosphorylated ppk in which a phosphate is covalently linked to a histidine residue through a N-P bond.

The enzyme catalyses [phosphate](n) + ATP = [phosphate](n+1) + ADP. Catalyzes the reversible transfer of the terminal phosphate of ATP to form a long-chain polyphosphate (polyP). The polypeptide is Polyphosphate kinase (Rhodopirellula baltica (strain DSM 10527 / NCIMB 13988 / SH1)).